Reading from the N-terminus, the 317-residue chain is Cytochrome f (317 aa).

Residues 1–31 form the signal peptide; that stretch reads MIFKPQSFLKAIVLSMTITFAFNMSAPIASA. Tyr-32, Cys-52, Cys-55, and His-56 together coordinate heme. A helical membrane pass occupies residues 280 to 302; sequence PVRIQGLLAFFACILLAQILLVV.

It belongs to the cytochrome f family. The 4 large subunits of the cytochrome b6-f complex are cytochrome b6, subunit IV (17 kDa polypeptide, petD), cytochrome f and the Rieske protein, while the 4 small subunits are PetG, PetL, PetM and PetN. The complex functions as a dimer. Heme serves as cofactor.

The protein localises to the plastid. The protein resides in the chloroplast thylakoid membrane. Component of the cytochrome b6-f complex, which mediates electron transfer between photosystem II (PSII) and photosystem I (PSI), cyclic electron flow around PSI, and state transitions. In Chlamydomonas subcaudata, this protein is Cytochrome f.